The following is a 60-amino-acid chain: Large ribosomal subunit protein bL32 (60 aa).

The segment covering 1-23 has biased composition (basic residues); it reads MAKHPVPKKKTSKARRDARRSHH. The segment at 1-28 is disordered; that stretch reads MAKHPVPKKKTSKARRDARRSHHALTPP.

It belongs to the bacterial ribosomal protein bL32 family. As to quaternary structure, part of the 50S ribosomal subunit.

In terms of biological role, found on the solvent side of the large subunit. The polypeptide is Large ribosomal subunit protein bL32 (rpmF) (Thermus thermophilus (strain ATCC BAA-163 / DSM 7039 / HB27)).